The sequence spans 32 residues: Ranatuerin-2Lb (32 aa).

Cys27 and Cys32 are joined by a disulfide.

As to expression, expressed by the skin glands.

It localises to the secreted. In terms of biological role, antibacterial activity against Gram-positive bacterium S.aureus and Gram-negative bacterium E.coli. Has activity against C.albicans. This is Ranatuerin-2Lb from Rana luteiventris (Columbia spotted frog).